The following is a 100-amino-acid chain: UPF0298 protein lp_2135 (100 aa).

The protein belongs to the UPF0298 family.

It localises to the cytoplasm. The protein is UPF0298 protein lp_2135 of Lactiplantibacillus plantarum (strain ATCC BAA-793 / NCIMB 8826 / WCFS1) (Lactobacillus plantarum).